We begin with the raw amino-acid sequence, 541 residues long: Phenazine N-monooxygenase PhzNO1 (541 aa).

FAD-binding positions include Asp39, 47 to 50, 59 to 60, Tyr65, and Ile112; these read TWYW and DT. 57–59 is an NADP(+) binding site; that stretch reads RAD. NADP(+) is bound by residues 186 to 192, 209 to 210, and Trp492; these read TGSTGVQ and RS.

It belongs to the FAD-binding monooxygenase family. It depends on FAD as a cofactor.

The enzyme catalyses 1,6-dihydroxyphenazine + NADPH + O2 = 1,6-dihydroxyphenazine N(5)-oxide + NADP(+) + H2O. It catalyses the reaction 1,6-dihydroxyphenazine N(5)-oxide + NADPH + O2 = 1,6-dihydroxyphenazine N(5),N(10)-dioxide + NADP(+) + H2O. The catalysed reaction is 1-hydroxy-6-methoxyphenazine + NADPH + O2 = 1-hydroxy-6-methoxyphenazine N(10)-oxide + NADP(+) + H2O. It carries out the reaction quinolin-8-ol + NADPH + O2 = 8-hydroxyquinoline N-oxide + NADP(+) + H2O. Functionally, involved in the biosynthesis of phenazine natural products including myxin, an N(5),N(10)-dioxide phenazine antiobiotic, which has antimicrobial activity. Catalyzes the aromatic N-oxidations of phenazines, such as 1,6-dihydroxyphenazine (DHP), 1,6-dihydroxyphenazine N(5)-oxide (DHPO) and 1-hydroxy-6-methoxyphenazine to produce DHPO, iodinin (1,6-dihydroxyphenazine N(5),N(10)-dioxide) and 1-hydroxy-6-methoxyphenazine N(10)-oxide, respectively. Also catalyzes the N-oxidation of 8-hydroxyquinoline, but not 6-hydroxyquinoline (6-HQ), quinoline, quinoxaline, quinine and 2-phenylpyridine. This is Phenazine N-monooxygenase PhzNO1 from Lysobacter antibioticus.